Consider the following 630-residue polypeptide: Probable potassium transport system protein Kup (630 aa).

12 consecutive transmembrane segments (helical) span residues L17–L37, P51–I71, I105–V125, P144–I164, L175–I195, V218–L238, Y255–L275, P283–A303, I344–F364, Y374–V394, L402–N422, and Q428–Y448.

It belongs to the HAK/KUP transporter (TC 2.A.72) family.

Its subcellular location is the cell inner membrane. The enzyme catalyses K(+)(in) + H(+)(in) = K(+)(out) + H(+)(out). Transport of potassium into the cell. Likely operates as a K(+):H(+) symporter. The protein is Probable potassium transport system protein Kup of Burkholderia pseudomallei (strain 1710b).